Reading from the N-terminus, the 229-residue chain is Uracil-DNA glycosylase (229 aa).

Asp64 functions as the Proton acceptor in the catalytic mechanism.

The protein belongs to the uracil-DNA glycosylase (UDG) superfamily. UNG family.

Its subcellular location is the cytoplasm. It catalyses the reaction Hydrolyzes single-stranded DNA or mismatched double-stranded DNA and polynucleotides, releasing free uracil.. Functionally, excises uracil residues from the DNA which can arise as a result of misincorporation of dUMP residues by DNA polymerase or due to deamination of cytosine. This is Uracil-DNA glycosylase from Klebsiella pneumoniae (strain 342).